We begin with the raw amino-acid sequence, 389 residues long: S-adenosylmethionine synthase (389 aa).

Residue His17 coordinates ATP. Asp19 provides a ligand contact to Mg(2+). Residue Glu45 participates in K(+) binding. L-methionine contacts are provided by Glu58 and Gln101. Residues 101–111 form a flexible loop region; sequence QSPDIGQGVDV. ATP contacts are provided by residues 160-162, 226-227, Asp235, 241-242, Ala258, and Lys262; these read DGK, RF, and RK. Asp235 serves as a coordination point for L-methionine. Lys266 lines the L-methionine pocket.

This sequence belongs to the AdoMet synthase family. Homotetramer; dimer of dimers. It depends on Mg(2+) as a cofactor. Requires K(+) as cofactor.

Its subcellular location is the cytoplasm. It carries out the reaction L-methionine + ATP + H2O = S-adenosyl-L-methionine + phosphate + diphosphate. The protein operates within amino-acid biosynthesis; S-adenosyl-L-methionine biosynthesis; S-adenosyl-L-methionine from L-methionine: step 1/1. In terms of biological role, catalyzes the formation of S-adenosylmethionine (AdoMet) from methionine and ATP. The overall synthetic reaction is composed of two sequential steps, AdoMet formation and the subsequent tripolyphosphate hydrolysis which occurs prior to release of AdoMet from the enzyme. The protein is S-adenosylmethionine synthase of Anaeromyxobacter sp. (strain Fw109-5).